A 356-amino-acid polypeptide reads, in one-letter code: Methionine import ATP-binding protein MetN (356 aa).

The ABC transporter domain maps to 7–250; that stretch reads IKLDNIDVTF…PRESLTQDFI (244 aa). 43-50 contacts ATP; it reads GYSGAGKS.

It belongs to the ABC transporter superfamily. Methionine importer (TC 3.A.1.24) family. As to quaternary structure, the complex is composed of two ATP-binding proteins (MetN), two transmembrane proteins (MetI) and a solute-binding protein (MetQ).

The protein resides in the cell membrane. It carries out the reaction L-methionine(out) + ATP + H2O = L-methionine(in) + ADP + phosphate + H(+). It catalyses the reaction D-methionine(out) + ATP + H2O = D-methionine(in) + ADP + phosphate + H(+). Functionally, part of the ABC transporter complex MetNIQ involved in methionine import. Responsible for energy coupling to the transport system. The sequence is that of Methionine import ATP-binding protein MetN from Streptococcus agalactiae serotype III (strain NEM316).